The sequence spans 404 residues: Cysteine desulfurase IscS (404 aa).

Residues 75-76 (AT), asparagine 155, glutamine 183, and 203-205 (SAH) contribute to the pyridoxal 5'-phosphate site. N6-(pyridoxal phosphate)lysine is present on lysine 206. Pyridoxal 5'-phosphate is bound at residue threonine 243. Residue cysteine 328 is the Cysteine persulfide intermediate of the active site. Cysteine 328 is a binding site for [2Fe-2S] cluster.

It belongs to the class-V pyridoxal-phosphate-dependent aminotransferase family. NifS/IscS subfamily. Homodimer. Forms a heterotetramer with IscU, interacts with other sulfur acceptors. Requires pyridoxal 5'-phosphate as cofactor.

The protein localises to the cytoplasm. The catalysed reaction is (sulfur carrier)-H + L-cysteine = (sulfur carrier)-SH + L-alanine. It functions in the pathway cofactor biosynthesis; iron-sulfur cluster biosynthesis. In terms of biological role, master enzyme that delivers sulfur to a number of partners involved in Fe-S cluster assembly, tRNA modification or cofactor biosynthesis. Catalyzes the removal of elemental sulfur atoms from cysteine to produce alanine. Functions as a sulfur delivery protein for Fe-S cluster synthesis onto IscU, an Fe-S scaffold assembly protein, as well as other S acceptor proteins. This chain is Cysteine desulfurase IscS, found in Pseudomonas syringae pv. tomato (strain ATCC BAA-871 / DC3000).